Reading from the N-terminus, the 110-residue chain is uncharacterized protein (110 aa).

A run of 3 helical transmembrane segments spans residues 32-52, 57-77, and 90-110; these read VLNV…ALVP, YTHM…CICI, and FLAS…TFVI.

The protein resides in the membrane. In terms of biological role, may play a role in proper chromosome segregation. Suppresses the high-frequency loss of mini-chromosomes when overexpressed, and this suppression is completely dependent on silencing protein SIR4. This is an uncharacterized protein from Saccharomyces cerevisiae (strain ATCC 204508 / S288c) (Baker's yeast).